A 153-amino-acid chain; its full sequence is Large ribosomal subunit protein uL15 (153 aa).

The disordered stretch occupies residues 1 to 47 (MRLHELSPAPGSRKDRKRVGRGDAGRGNYSGRGMKGQKARSGGATRP).

The protein belongs to the universal ribosomal protein uL15 family. In terms of assembly, part of the 50S ribosomal subunit.

In terms of biological role, binds to the 23S rRNA. The chain is Large ribosomal subunit protein uL15 from Dehalococcoides mccartyi (strain ATCC BAA-2100 / JCM 16839 / KCTC 5957 / BAV1).